The following is an 842-amino-acid chain: Glycogen phosphorylase, muscle form (842 aa).

S2 is subject to N-acetylserine. At S15 the chain carries Phosphoserine; by PHK; in form phosphorylase A. Residues D43 and Y76 each coordinate AMP. Phosphotyrosine is present on residues Y204 and Y227. 310–319 contributes to the AMP binding site; the sequence is RRFKSSKFGC. S430 carries the post-translational modification Phosphoserine. Y473 bears the Phosphotyrosine mark. Residue S514 is modified to Phosphoserine. N6-(pyridoxal phosphate)lysine is present on K681. 2 positions are modified to phosphoserine: S747 and S748.

Belongs to the glycogen phosphorylase family. As to quaternary structure, homodimer. Homotetramer; to form the enzymatically active phosphorylase A. It depends on pyridoxal 5'-phosphate as a cofactor. Post-translationally, phosphorylation of Ser-15 converts phosphorylase B (unphosphorylated) to phosphorylase A.

The catalysed reaction is [(1-&gt;4)-alpha-D-glucosyl](n) + phosphate = [(1-&gt;4)-alpha-D-glucosyl](n-1) + alpha-D-glucose 1-phosphate. Allosterically regulated through the non-covalent binding of metabolites, being activated by AMP and inhibited by ATP, ADP, and glucose-6-phosphate. The activity is also controlled by post-translational modifications including phosphorylation. In terms of biological role, allosteric enzyme that catalyzes the rate-limiting step in glycogen catabolism, the phosphorolytic cleavage of glycogen to produce glucose-1-phosphate, and plays a central role in maintaining cellular and organismal glucose homeostasis. The polypeptide is Glycogen phosphorylase, muscle form (Homo sapiens (Human)).